The chain runs to 194 residues: Probable GTP-binding protein EngB (194 aa).

Positions 22 to 194 (DLPEYALAGR…AWQFIKEGME (173 aa)) constitute an EngB-type G domain. Residues 30-37 (GRSNVGKS), 57-61 (GKTQT), 75-78 (DVPG), 142-145 (TKAD), and 174-176 (FSS) each bind GTP. Residues Ser37 and Thr59 each coordinate Mg(2+).

This sequence belongs to the TRAFAC class TrmE-Era-EngA-EngB-Septin-like GTPase superfamily. EngB GTPase family. The cofactor is Mg(2+).

In terms of biological role, necessary for normal cell division and for the maintenance of normal septation. The chain is Probable GTP-binding protein EngB from Listeria welshimeri serovar 6b (strain ATCC 35897 / DSM 20650 / CCUG 15529 / CIP 8149 / NCTC 11857 / SLCC 5334 / V8).